The chain runs to 335 residues: Phosphatidylglycerol--prolipoprotein diacylglyceryl transferase (335 aa).

A run of 3 helical transmembrane segments spans residues 31–51 (IYWY…TYSL), 67–87 (YIFL…LAIG), and 100–120 (LAIQ…FPLI). R163 serves as a coordination point for a 1,2-diacyl-sn-glycero-3-phospho-(1'-sn-glycerol). The next 3 helical transmembrane spans lie at 213 to 233 (PLFL…YFGL), 235 to 255 (YIKQ…YGVI), and 277 to 297 (SLLL…APIL).

The protein belongs to the Lgt family.

It is found in the cell membrane. It carries out the reaction L-cysteinyl-[prolipoprotein] + a 1,2-diacyl-sn-glycero-3-phospho-(1'-sn-glycerol) = an S-1,2-diacyl-sn-glyceryl-L-cysteinyl-[prolipoprotein] + sn-glycerol 1-phosphate + H(+). The protein operates within protein modification; lipoprotein biosynthesis (diacylglyceryl transfer). Catalyzes the transfer of the diacylglyceryl group from phosphatidylglycerol to the sulfhydryl group of the N-terminal cysteine of a prolipoprotein, the first step in the formation of mature lipoproteins. This chain is Phosphatidylglycerol--prolipoprotein diacylglyceryl transferase, found in Ureaplasma urealyticum serovar 10 (strain ATCC 33699 / Western).